We begin with the raw amino-acid sequence, 503 residues long: Maturase K (503 aa).

This sequence belongs to the intron maturase 2 family. MatK subfamily.

It is found in the plastid. The protein localises to the chloroplast. Its function is as follows. Usually encoded in the trnK tRNA gene intron. Probably assists in splicing its own and other chloroplast group II introns. The polypeptide is Maturase K (Rhamnus cathartica (Common buckthorn)).